The primary structure comprises 367 residues: Pre-small/secreted glycoprotein (367 aa).

An N-terminal signal peptide occupies residues 1 to 33 (MGSGYQLLQLPRERFRKTSFLVWVIILFQRAIS). Residue Asn-41 is glycosylated (N-linked (GlcNAc...) asparagine; by host). Cystine bridges form between Cys-109-Cys-136 and Cys-122-Cys-148. 5 N-linked (GlcNAc...) asparagine; by host glycosylation sites follow: Asn-205, Asn-229, Asn-239, Asn-258, and Asn-269.

This sequence belongs to the filoviruses glycoprotein family. In terms of assembly, homodimer; disulfide-linked. The homodimers are linked by two disulfide bonds in a parallel orientation. Monomer. This precursor is processed into mature sGP and delta-peptide by host furin or furin-like proteases. The cleavage site corresponds to the furin optimal cleavage sequence [KR]-X-[KR]-R. Post-translationally, N-glycosylated. In terms of processing, O-glycosylated.

It localises to the secreted. Seems to possess an anti-inflammatory activity as it can reverse the barrier-decreasing effects of TNF alpha. Might therefore contribute to the lack of inflammatory reaction seen during infection in spite the of extensive necrosis and massive virus production. Does not seem to be involved in activation of primary macrophages. Does not seem to interact specifically with neutrophils. Its function is as follows. Viroporin that permeabilizes mammalian cell plasma membranes. It acts by altering permeation of ionic compounds and small molecules. This activity may lead to viral enterotoxic activity. The sequence is that of Pre-small/secreted glycoprotein (GP) from Epomops franqueti (Franquet's epauletted fruit bat).